The primary structure comprises 31 residues: Photosystem II reaction center protein Psb30 (31 aa).

Residues 5–25 form a helical membrane-spanning segment; sequence IQLTSLLLIVIAGPLVIALLF.

This sequence belongs to the Psb30/Ycf12 family. PSII is composed of 1 copy each of membrane proteins PsbA, PsbB, PsbC, PsbD, PsbE, PsbF, PsbH, PsbI, PsbJ, PsbK, PsbL, PsbM, PsbT, PsbX, PsbY, PsbZ, Psb30/Ycf12, peripheral proteins of the oxygen-evolving complex and a large number of cofactors. It forms dimeric complexes.

The protein resides in the plastid. The protein localises to the chloroplast thylakoid membrane. Its function is as follows. A core subunit of photosystem II (PSII), probably helps stabilize the reaction center. In Phacus acuminatus, this protein is Photosystem II reaction center protein Psb30.